The following is a 454-amino-acid chain: F-box/WD repeat-containing protein 2 (454 aa).

An F-box domain is found at 54–101 (RDFLKLLPLELSFYLLKWLDPQTLLTCCLVSKQWNKVISACTEVWQTA). 4 WD repeats span residues 146-183 (GHSA…CVYG), 185-221 (QTHT…RTQH), 224-265 (GHTG…NTLT), and 276-314 (LQQC…NCKC). Lys-298 carries the N6-acetyllysine modification.

In terms of assembly, directly interacts with SKP1 and CUL1.

Substrate-recognition component of the SCF (SKP1-CUL1-F-box protein)-type E3 ubiquitin ligase complex. The sequence is that of F-box/WD repeat-containing protein 2 from Rattus norvegicus (Rat).